We begin with the raw amino-acid sequence, 418 residues long: Lysophosphatidic acid phosphatase type 6 (418 aa).

A mitochondrion-targeting transit peptide spans 1–25 (MRVWVPVGVLTSLAYCFHQRRVALA). Positions 51–161 (RHGARSPLKP…VFIRSTNMFR (111 aa)) are substrate binding. His52 serves as the catalytic Nucleophile. Asp327 acts as the Proton donor in catalysis.

It belongs to the histidine acid phosphatase family. Monomer.

The protein resides in the mitochondrion. It carries out the reaction a phosphate monoester + H2O = an alcohol + phosphate. It catalyses the reaction 1-(9Z-octadecenoyl)-sn-glycero-3-phosphate + H2O = 1-(9Z-octadecenoyl)-sn-glycerol + phosphate. Hydrolyzes lysophosphatidic acid (LPA) containing a medium length fatty acid chain to the corresponding monoacylglycerol. Has highest activity with lysophosphatidic acid containing myristate (C14:0), monounsaturated oleate (C18:1) or palmitate (C16:0), and lower activity with C18:0 and C6:0 lysophosphatidic acid. This Mus musculus (Mouse) protein is Lysophosphatidic acid phosphatase type 6 (Acp6).